The sequence spans 423 residues: Probable electron transfer flavoprotein-quinone oxidoreductase YgcN (423 aa).

7–21 (IIIIGAGIAGTACAL) contributes to the FAD binding site.

This sequence belongs to the ETF-QO/FixC family. It depends on FAD as a cofactor.

In terms of biological role, probably accepts electrons from YgcQ/YgcR and reduces a quinone. The protein is Probable electron transfer flavoprotein-quinone oxidoreductase YgcN (ygcN) of Escherichia coli (strain K12).